A 215-amino-acid chain; its full sequence is 3,4-dihydroxy-2-butanone 4-phosphate synthase (215 aa).

D-ribulose 5-phosphate contacts are provided by residues 38–39, Asp43, 151–155, and Glu175; these read RE and RRGHT. Glu39 serves as a coordination point for Mg(2+). Position 154 (His154) interacts with Mg(2+).

Belongs to the DHBP synthase family. As to quaternary structure, homodimer. Mg(2+) serves as cofactor. Mn(2+) is required as a cofactor.

It catalyses the reaction D-ribulose 5-phosphate = (2S)-2-hydroxy-3-oxobutyl phosphate + formate + H(+). The protein operates within cofactor biosynthesis; riboflavin biosynthesis; 2-hydroxy-3-oxobutyl phosphate from D-ribulose 5-phosphate: step 1/1. Its function is as follows. Catalyzes the conversion of D-ribulose 5-phosphate to formate and 3,4-dihydroxy-2-butanone 4-phosphate. This is 3,4-dihydroxy-2-butanone 4-phosphate synthase from Haemophilus influenzae (strain ATCC 51907 / DSM 11121 / KW20 / Rd).